The chain runs to 579 residues: MDLLPPKPKYNPLRNESLSSLEEGASGSTPPEELPSPSASSLGPILPPLPGDDSPTTLCSFFPRMSNLKLANPAGGRLGPKGEPGKAAEDGEGSAGAALRDSGLLPLLQDMNKLSGGGGRRTRVEGGQLGGEEWTRHGSFVNKPTRGWLHPNDKVMGPGVSYLVRYMGCVEVLQSMRALDFNTRTQVTREAISLVCEAVPGAKGATRRRKPCSRPLSSILGRSNLKFAGMPITLTVSTSSLNLMAADCKQIIANHHMQSISFASGGDPDTAEYVAYVAKDPVNQRACHILECPEGLAQDVISTIGQAFELRFKQYLRNPPKLVTPHDRMAGFDGSAWDEEEEEPPDHQYYNDFPGKEPPLGGVVDMRLREGAARPTLPSAQMSSHLGATLPIGQHAAGDHEVRKQMLPPPPCPGRELFDDPSYVNIQNLDKARQAGGGAGPPNPSLNGSAPRDLFDMKPFEDALRVPPPPQSMSMAEQLQGEPWFHGKLSRREAEALLQLNGDFLVRESTTTPGQYVLTGLQSGQPKHLLLVDPEGVVRTKDHRFESVSHLISYHMDNHLPIISAGSELCLQQPVDRKV.

An N-acetylmethionine modification is found at Met1. The segment at 1-137 (MDLLPPKPKY…QLGGEEWTRH (137 aa)) is disordered. Residues 16–44 (ESLSSLEEGASGSTPPEELPSPSASSLGP) show a composition bias toward low complexity. Ser36 and Ser139 each carry phosphoserine. Lys154 carries the N6-acetyllysine modification. Positions 156–339 (MGPGVSYLVR…AGFDGSAWDE (184 aa)) constitute a PID domain. Positions 337 to 357 (WDEEEEEPPDHQYYNDFPGKE) are disordered. Residues 340–483 (EEEEPPDHQY…SMAEQLQGEP (144 aa)) form a CH1 region. Tyr349, Tyr350, and Tyr423 each carry phosphotyrosine. The interval 432-451 (ARQAGGGAGPPNPSLNGSAP) is disordered. The residue at position 449 (Ser449) is a Phosphoserine. Residues 484 to 575 (WFHGKLSRRE…GSELCLQQPV (92 aa)) enclose the SH2 domain.

As to quaternary structure, interacts with CPNE3; this interaction may mediate the binding of CPNE3 with ERBB2. Interacts with the NPXY motif of tyrosine-phosphorylated IGF1R and INSR in vitro via the PID domain. Once activated, binds to GRB2. Interacts with tyrosine-phosphorylated DDR2 and CD3T. Interacts with the N-terminal region of APS. Interacts with GRB7 and KIT. Interacts with PTK2/FAK1. Interacts with phosphorylated LRP1 and IRS4. Interacts with FLT4 (tyrosine-phosphorylated). Interacts with PDGFRB (tyrosine-phosphorylated). Interacts with ERBB4. Interacts with TEK/TIE2 (tyrosine-phosphorylated). Interacts with ALK, GAB2, TRIM31, INPP5D/SHIP1 and INPPL1/SHIP2. Interacts with PTPN6/SHP (tyrosine phosphorylated). Identified in a complex containing FGFR4, NCAM1, CDH2, PLCG1, FRS2, SRC, SHC1, GAP43 and CTTN. Interacts with EPHB1 and GRB2; activates the MAPK/ERK cascade to regulate cell migration. Interacts with the Trk receptors NTRK1, NTRK2 and NTRK3; in a phosphotyrosine-dependent manner. Interacts with CEACAM1; this interaction is CEACAM1-phosphorylation-dependent and mediates interaction with EGFR or INSR resulting in decrease coupling of SHC1 to the MAPK3/ERK1-MAPK1/ERK2 pathway. Interacts (via PID domain) with PEAK1 (when phosphorylated at 'Tyr-1177'). Found in a complex with PPP1CA, PPP1CC, SHC1 and PEAK1. In terms of processing, phosphorylated in response to FLT4 signaling. Tyrosine phosphorylated by ligand-activated PDGFRB. May be tyrosine phosphorylated by activated PTK2/FAK1. Tyrosine phosphorylated by TEK/TIE2. Tyrosine phosphorylated by activated PTK2B/PYK2. Dephosphorylation by PTPN2 may regulate interaction with GRB2. Phosphorylated by activated epidermal growth factor receptor. Phosphorylated in response to KIT signaling. Isoform p47Shc and isoform p52Shc are phosphorylated on tyrosine residues of the Pro-rich domain. Isoform p66Shc is phosphorylated on Ser-36 by PRKCB upon treatment with insulin, hydrogen peroxide or irradiation with ultraviolet light. FLT3 signaling promotes tyrosine phosphorylation of isoform p47Shc and isoform p52Shc. Also tyrosine phosphorylated by ligand-activated ALK. In terms of tissue distribution, widely expressed. Expressed in neural stem cells but absent in mature neurons.

Its subcellular location is the cytoplasm. The protein localises to the cell junction. It localises to the focal adhesion. The protein resides in the mitochondrion matrix. It is found in the mitochondrion. Functionally, signaling adapter that couples activated growth factor receptors to signaling pathways. Participates in signaling downstream of the angiopoietin receptor TEK/TIE2, and plays a role in the regulation of endothelial cell migration and sprouting angiogenesis. Participates in a signaling cascade initiated by activated KIT and KITLG/SCF. Isoform p47Shc and isoform p52Shc, once phosphorylated, couple activated receptor kinases to Ras via the recruitment of the GRB2/SOS complex and are implicated in the cytoplasmic propagation of mitogenic signals. Isoform p47Shc and isoform p52 may thus function as initiators of the Ras signaling cascade in various non-neuronal systems. Isoform p66Shc does not mediate Ras activation, but is involved in signal transduction pathways that regulate the cellular response to oxidative stress and life span. Isoform p66Shc acts as a downstream target of the tumor suppressor p53 and is indispensable for the ability of stress-activated p53 to induce elevation of intracellular oxidants, cytochrome c release and apoptosis. The expression of isoform p66Shc has been correlated with life span. The sequence is that of SHC-transforming protein 1 (Shc1) from Mus musculus (Mouse).